Here is a 325-residue protein sequence, read N- to C-terminus: tRNA uridine(34) hydroxylase (325 aa).

One can recognise a Rhodanese domain in the interval 122–218 (EENRCLVLDV…YGQAMGTGKW (97 aa)). Residue Cys-178 is the Cysteine persulfide intermediate of the active site.

It belongs to the TrhO family.

The enzyme catalyses uridine(34) in tRNA + AH2 + O2 = 5-hydroxyuridine(34) in tRNA + A + H2O. Catalyzes oxygen-dependent 5-hydroxyuridine (ho5U) modification at position 34 in tRNAs. The sequence is that of tRNA uridine(34) hydroxylase from Chlamydia felis (strain Fe/C-56) (Chlamydophila felis).